Here is a 66-residue protein sequence, read N- to C-terminus: Large ribosomal subunit protein uL29 (66 aa).

The protein belongs to the universal ribosomal protein uL29 family. As to quaternary structure, part of the 50S ribosomal subunit.

The chain is Large ribosomal subunit protein uL29 (rpmC) from Bacillus subtilis (strain 168).